The primary structure comprises 343 residues: NADH dehydrogenase [ubiquinone] 1 alpha subcomplex subunit 10, mitochondrial (343 aa).

The transit peptide at Met1 to Lys23 directs the protein to the mitochondrion. Lys110 carries the N6-acetyllysine; alternate modification. Lys110 bears the N6-succinyllysine; alternate mark. At Ser238 the chain carries Phosphoserine; by PINK1.

It belongs to the complex I NDUFA10 subunit family. Complex I is composed of 45 different subunits. This a component of the hydrophobic protein fraction. It depends on FAD as a cofactor. Phosphorylation at Ser-238 by PINK1 is required for the binding and/or reduction of the complex I substrate ubiquinone.

It localises to the mitochondrion matrix. In terms of biological role, accessory subunit of the mitochondrial membrane respiratory chain NADH dehydrogenase (Complex I), that is believed not to be involved in catalysis. Complex I functions in the transfer of electrons from NADH to the respiratory chain. The immediate electron acceptor for the enzyme is believed to be ubiquinone. The chain is NADH dehydrogenase [ubiquinone] 1 alpha subcomplex subunit 10, mitochondrial (NDUFA10) from Bos taurus (Bovine).